The primary structure comprises 271 residues: Phosphatidylglycerol--prolipoprotein diacylglyceryl transferase (271 aa).

A run of 7 helical transmembrane segments spans residues 21–41 (ISVR…MWLA), 60–80 (LLFA…VLFY), 95–115 (VWTG…AMLW), 124–144 (FFGV…VGRL), 176–196 (SQLY…NWFI), 203–223 (GSVS…VEYV), and 230–250 (LGLF…MIIG). Residue Arg143 participates in a 1,2-diacyl-sn-glycero-3-phospho-(1'-sn-glycerol) binding.

This sequence belongs to the Lgt family.

The protein localises to the cell inner membrane. It catalyses the reaction L-cysteinyl-[prolipoprotein] + a 1,2-diacyl-sn-glycero-3-phospho-(1'-sn-glycerol) = an S-1,2-diacyl-sn-glyceryl-L-cysteinyl-[prolipoprotein] + sn-glycerol 1-phosphate + H(+). It functions in the pathway protein modification; lipoprotein biosynthesis (diacylglyceryl transfer). Its function is as follows. Catalyzes the transfer of the diacylglyceryl group from phosphatidylglycerol to the sulfhydryl group of the N-terminal cysteine of a prolipoprotein, the first step in the formation of mature lipoproteins. This is Phosphatidylglycerol--prolipoprotein diacylglyceryl transferase from Vibrio vulnificus (strain CMCP6).